A 397-amino-acid polypeptide reads, in one-letter code: Glia-derived nexin (397 aa).

The N-terminal stretch at Met1–Tyr19 is a signal peptide. Asn159 carries an N-linked (GlcNAc...) asparagine glycan.

Belongs to the serpin family.

The protein resides in the secreted. The protein localises to the extracellular space. Its function is as follows. Serine protease inhibitor with activity toward thrombin, trypsin, and urokinase. Promotes neurite extension by inhibiting thrombin. Binds heparin. This is Glia-derived nexin (Serpine2) from Rattus norvegicus (Rat).